Here is a 520-residue protein sequence, read N- to C-terminus: Hydroxymethylglutaryl-CoA synthase, cytoplasmic (520 aa).

Residue Ser4 is modified to Phosphoserine. 2 residues coordinate (3S)-3-hydroxy-3-methylglutaryl-CoA: Asp43 and Ala44. A CoA-binding site is contributed by 44 to 46; sequence AGK. Lys46 carries the N6-acetyllysine modification. Glu95 serves as the catalytic Proton donor/acceptor. The (3S)-3-hydroxy-3-methylglutaryl-CoA site is built by Cys129, Asn167, Thr171, Ser221, and His264. Cys129 serves as the catalytic Acyl-thioester intermediate. Asn167 lines the CoA pocket. A CoA-binding site is contributed by Ser221. The active-site Proton donor/acceptor is the His264. 2 residues coordinate CoA: Lys269 and Lys273. Lys273, Asn343, and Ser377 together coordinate (3S)-3-hydroxy-3-methylglutaryl-CoA. Lys273 carries the N6-acetyllysine modification. Position 476 is a phosphothreonine (Thr476). The disordered stretch occupies residues 492–520; that stretch reads HIPSPAKKVPRLPATAAEPEAAVISNGEH. Phosphoserine is present on residues Ser495 and Ser516.

This sequence belongs to the thiolase-like superfamily. HMG-CoA synthase family. As to quaternary structure, homodimer.

The protein localises to the cytoplasm. It catalyses the reaction acetoacetyl-CoA + acetyl-CoA + H2O = (3S)-3-hydroxy-3-methylglutaryl-CoA + CoA + H(+). It participates in metabolic intermediate biosynthesis; (R)-mevalonate biosynthesis; (R)-mevalonate from acetyl-CoA: step 2/3. In terms of biological role, catalyzes the condensation of acetyl-CoA with acetoacetyl-CoA to form HMG-CoA, which is converted by HMG-CoA reductase (HMGCR) into mevalonate, a precursor for cholesterol synthesis. The protein is Hydroxymethylglutaryl-CoA synthase, cytoplasmic of Homo sapiens (Human).